The following is a 250-amino-acid chain: ADPR responsive transcriptional repressor NtrR (250 aa).

The region spanning 26–157 (LMTVDMAIFS…DHHDLLQQAF (132 aa)) is the Nudix hydrolase domain. A Nudix box motif is present at residues 62 to 85 (GFVDLEQDQNLMACAHRKLLEKTG). Residues 164–237 (TRYTALPISL…RFALQDYDFN (74 aa)) are winged helix-like DNA-binding region.

DNA binding is efficiently suppressed in the presence of ADP-ribose (ADPR) or phospho-ADPR. Accumulation of ADPR resulting from NAD degradation may be interpreted by the cell as a signal to activate recycling of nicotinamide. Its function is as follows. Involved in the transcriptional regulation of the nondeamidating salvage pathway for production of NAD from nicotinamide. Represses expression of the prs-nadV-nrtR operon by binding to the DNA region located upstream of the operon, thus blocking the nondeamidating pathway. In Acinetobacter baylyi (strain ATCC 33305 / BD413 / ADP1), this protein is ADPR responsive transcriptional repressor NtrR.